A 211-amino-acid polypeptide reads, in one-letter code: Pyridoxine/pyridoxamine 5'-phosphate oxidase (211 aa).

Substrate is bound by residues 7–10 (RREY) and lysine 65. Residues 60–65 (RTVLLK), 75–76 (YT), arginine 81, lysine 82, and glutamine 104 contribute to the FMN site. Tyrosine 122, arginine 126, and serine 130 together coordinate substrate. FMN-binding positions include 139-140 (QS) and tryptophan 184. 190 to 192 (RLH) lines the substrate pocket. An FMN-binding site is contributed by arginine 194.

It belongs to the pyridoxamine 5'-phosphate oxidase family. As to quaternary structure, homodimer. FMN serves as cofactor.

It catalyses the reaction pyridoxamine 5'-phosphate + O2 + H2O = pyridoxal 5'-phosphate + H2O2 + NH4(+). It carries out the reaction pyridoxine 5'-phosphate + O2 = pyridoxal 5'-phosphate + H2O2. It functions in the pathway cofactor metabolism; pyridoxal 5'-phosphate salvage; pyridoxal 5'-phosphate from pyridoxamine 5'-phosphate: step 1/1. Its pathway is cofactor metabolism; pyridoxal 5'-phosphate salvage; pyridoxal 5'-phosphate from pyridoxine 5'-phosphate: step 1/1. Functionally, catalyzes the oxidation of either pyridoxine 5'-phosphate (PNP) or pyridoxamine 5'-phosphate (PMP) into pyridoxal 5'-phosphate (PLP). The sequence is that of Pyridoxine/pyridoxamine 5'-phosphate oxidase from Aeromonas hydrophila subsp. hydrophila (strain ATCC 7966 / DSM 30187 / BCRC 13018 / CCUG 14551 / JCM 1027 / KCTC 2358 / NCIMB 9240 / NCTC 8049).